The sequence spans 197 residues: Probable S-adenosylmethionine-dependent methyltransferase MJ0882 (197 aa).

Residues 63–67 (GCGYG), Asp-84, and Asn-129 contribute to the S-adenosyl-L-methionine site. 129-132 (NPPI) provides a ligand contact to substrate.

The protein belongs to the methyltransferase superfamily.

In terms of biological role, probable methyltransferase that uses S-adenosylmethionine as the methyl donor. Binds neither NAD nor NADP in vitro. This is Probable S-adenosylmethionine-dependent methyltransferase MJ0882 from Methanocaldococcus jannaschii (strain ATCC 43067 / DSM 2661 / JAL-1 / JCM 10045 / NBRC 100440) (Methanococcus jannaschii).